We begin with the raw amino-acid sequence, 184 residues long: Large ribosomal subunit protein uL5c (184 aa).

This sequence belongs to the universal ribosomal protein uL5 family. As to quaternary structure, part of the 50S ribosomal subunit; contacts the 5S rRNA.

It localises to the plastid. It is found in the chloroplast. Binds 5S rRNA, forms part of the central protuberance of the 50S subunit. The polypeptide is Large ribosomal subunit protein uL5c (rpl5) (Zygnema circumcarinatum (Green alga)).